A 286-amino-acid polypeptide reads, in one-letter code: Polyamine aminopropyltransferase (286 aa).

The 234-residue stretch at 9 to 242 (NGWIDEHHQG…GWWSWTFAAI (234 aa)) folds into the PABS domain. Glutamine 36 is an S-methyl-5'-thioadenosine binding site. The spermidine site is built by histidine 67 and aspartate 91. Residues glutamate 111 and 143 to 144 (NG) each bind S-methyl-5'-thioadenosine. Residue aspartate 162 is the Proton acceptor of the active site. Proline 169 lines the S-methyl-5'-thioadenosine pocket.

It belongs to the spermidine/spermine synthase family. In terms of assembly, homodimer or homotetramer.

The protein localises to the cytoplasm. The catalysed reaction is S-adenosyl 3-(methylsulfanyl)propylamine + putrescine = S-methyl-5'-thioadenosine + spermidine + H(+). The protein operates within amine and polyamine biosynthesis; spermidine biosynthesis; spermidine from putrescine: step 1/1. Functionally, catalyzes the irreversible transfer of a propylamine group from the amino donor S-adenosylmethioninamine (decarboxy-AdoMet) to putrescine (1,4-diaminobutane) to yield spermidine. This chain is Polyamine aminopropyltransferase, found in Prochlorococcus marinus (strain MIT 9313).